The following is a 593-amino-acid chain: Cytochrome c oxidase polypeptide 1 (593 aa).

Transmembrane regions (helical) follow at residues 5 to 25 (ASSI…VAVL) and 71 to 91 (IGIL…VSVL). His-117 contributes to the Fe(II)-heme a binding site. The next 6 membrane-spanning stretches (helical) occupy residues 122–142 (LFLF…PLLI), 154–174 (AIAF…FLIP), 204–224 (GLHL…ATIF), 246–266 (QSGL…MLLL), 288–308 (LFWF…MGIV), and 320–340 (LFGF…SFGV). Residues His-294 and Tyr-298 each contribute to the Cu cation site. Residues 294–298 (HPEVY) constitute a cross-link (1'-histidyl-3'-tyrosine (His-Tyr)). Cu cation is bound by residues His-343 and His-344. Transmembrane regions (helical) follow at residues 358 to 378 (FMAV…NWIT), 401 to 421 (FIIG…LILH), 425 to 445 (YVVG…LFAA), 467 to 487 (FWTA…LGYG), and 506 to 526 (LATV…FNMA). Residue His-429 participates in heme a3 binding. Position 431 (His-431) interacts with Fe(II)-heme a. A disordered region spans residues 562–593 (TTVLPDGGDEAQSEADAVTDGGQPAADSDTES).

Belongs to the heme-copper respiratory oxidase family.

Its subcellular location is the cell membrane. It carries out the reaction 4 Fe(II)-[cytochrome c] + O2 + 8 H(+)(in) = 4 Fe(III)-[cytochrome c] + 2 H2O + 4 H(+)(out). It participates in energy metabolism; oxidative phosphorylation. Functionally, cytochrome c oxidase is the component of the respiratory chain that catalyzes the reduction of oxygen to water. Subunits 1-3 form the functional core of the enzyme complex. CO I is the catalytic subunit of the enzyme. Electrons originating in cytochrome c are transferred via the copper A center of subunit 2 and heme A of subunit 1 to the bimetallic center formed by heme A3 and copper B. The chain is Cytochrome c oxidase polypeptide 1 (coxA2) from Halobacterium salinarum (strain ATCC 700922 / JCM 11081 / NRC-1) (Halobacterium halobium).